The chain runs to 148 residues: C-C motif chemokine 2 (148 aa).

The signal sequence occupies residues 1–23 (MQVPVMLLGLLFTVAGWSIHVLA). At Gln24 the chain carries Pyrrolidone carboxylic acid. 2 cysteine pairs are disulfide-bonded: Cys34–Cys59 and Cys35–Cys75. N-linked (GlcNAc...) asparagine glycosylation is present at Asn126.

This sequence belongs to the intercrine beta (chemokine CC) family. As to quaternary structure, monomer or homodimer; in equilibrium. Is tethered on endothelial cells by glycosaminoglycan (GAG) side chains of proteoglycans. Interacts with TNFAIP6 (via Link domain). Post-translationally, processing at the N-terminus can regulate receptor and target cell selectivity. Deletion of the N-terminal residue converts it from an activator of basophil to an eosinophil chemoattractant. N-Glycosylated.

Its subcellular location is the secreted. Its function is as follows. Acts as a ligand for C-C chemokine receptor CCR2. Signals through binding and activation of CCR2 and induces a strong chemotactic response and mobilization of intracellular calcium ions. Exhibits a chemotactic activity for monocytes and basophils but not neutrophils or eosinophils. Plays an important role in mediating peripheral nerve injury-induced neuropathic pain. Increases NMDA-mediated synaptic transmission in both dopamine D1 and D2 receptor-containing neurons, which may be caused by MAPK/ERK-dependent phosphorylation of GRIN2B/NMDAR2B. The polypeptide is C-C motif chemokine 2 (Ccl2) (Mus musculus (Mouse)).